The primary structure comprises 81 residues: Photosystem I iron-sulfur center (81 aa).

2 consecutive 4Fe-4S ferredoxin-type domains span residues 2–31 (AHSV…MVPR) and 39–68 (IASA…VRVY). Cys11, Cys14, Cys17, Cys21, Cys48, Cys51, Cys54, and Cys58 together coordinate [4Fe-4S] cluster.

As to quaternary structure, the eukaryotic PSI reaction center is composed of at least 11 subunits. [4Fe-4S] cluster is required as a cofactor.

It is found in the plastid. The protein localises to the chloroplast thylakoid membrane. The catalysed reaction is reduced [plastocyanin] + hnu + oxidized [2Fe-2S]-[ferredoxin] = oxidized [plastocyanin] + reduced [2Fe-2S]-[ferredoxin]. In terms of biological role, apoprotein for the two 4Fe-4S centers FA and FB of photosystem I (PSI); essential for photochemical activity. FB is the terminal electron acceptor of PSI, donating electrons to ferredoxin. The C-terminus interacts with PsaA/B/D and helps assemble the protein into the PSI complex. Required for binding of PsaD and PsaE to PSI. PSI is a plastocyanin/cytochrome c6-ferredoxin oxidoreductase, converting photonic excitation into a charge separation, which transfers an electron from the donor P700 chlorophyll pair to the spectroscopically characterized acceptors A0, A1, FX, FA and FB in turn. This is Photosystem I iron-sulfur center from Antithamnion sp. (Red alga).